Here is a 786-residue protein sequence, read N- to C-terminus: MNDRVLRVLEFNKIKELVKGYAITKSAKEMVLDLKPYDSVYDVKEHLEETKEALDILMRKGNPPFEGLYDVKEAITRAEKGGVLSIEGLLRIGNMLSVTRKLSDFLARKEEEEEHRILEGMREGLIVLRGVESAISKAIVSEDEIADSASDKLYSIRRSLKEKNSSIRDKVNSIVRSNAQYLQDSLYTVRGDRYVIPVKAEYKSQVPGLVHDQSSTGATLFIEPTALVNLNNEIKELMLKERAEIERILAELSALVYKNIDVIKVNFNIIVELDFIFAKAKYGSDLGGTMPIVNEEGVIDLMDARHPLIPKDKVVSSDIYLGREFSTLLITGPNTGGKTVTLKTTGLIELMGLSGLLIPASENSSISFFEEIFADIGDEQSIEQSLSTFSSHMTNIVKIMEKANNKSFVLFDELGAGTDPTEGAALAISILENLRARGCRIMSTTHYSELKGYALKTENVENASVEFNVETLRPTYRLLIGVPGKSNAFEISRRLGLKDNVIEEAKKVISTESLQFEDLIQSLQEKSIKAENDAREAAILRNDAEKYKNRYKEKFERIESVRDNVYADARREAKQILDSAKEEADAILKNMRDLERMGISSDARRKLEAERGKLRDKISDAEARLQKKKEEQKGEELKKIEVGMEALLPSINQKVIVLSKPDNKGEVQVQAGIMKINVKAKDLRVAKETKEEKKIKKREARLNLRQVDPSIDLRGMDSEEACYTADKYLDDAYVAGRGEVTLVHGKGTGVLRKAINDMLKKHPHVKSHRLGEYGEGGTGVTVVILK.

An ATP-binding site is contributed by 332–339; sequence GPNTGGKT. Residues 711–786 enclose the Smr domain; that stretch reads IDLRGMDSEE…GTGVTVVILK (76 aa).

Belongs to the DNA mismatch repair MutS family. MutS2 subfamily. Homodimer. Binds to stalled ribosomes, contacting rRNA.

Functionally, endonuclease that is involved in the suppression of homologous recombination and thus may have a key role in the control of bacterial genetic diversity. Acts as a ribosome collision sensor, splitting the ribosome into its 2 subunits. Detects stalled/collided 70S ribosomes which it binds and splits by an ATP-hydrolysis driven conformational change. Acts upstream of the ribosome quality control system (RQC), a ribosome-associated complex that mediates the extraction of incompletely synthesized nascent chains from stalled ribosomes and their subsequent degradation. Probably generates substrates for RQC. This chain is Endonuclease MutS2, found in Clostridium perfringens (strain ATCC 13124 / DSM 756 / JCM 1290 / NCIMB 6125 / NCTC 8237 / Type A).